Consider the following 202-residue polypeptide: Matrix protein (202 aa).

Residues 1 to 33 (MNILRKIVKNRKDEDTQKPSPASAPPDDDDLWL) are disordered. Residues 35–38 (PPEY) carry the PPXY motif motif. Positions 115–151 (KLRRTLIFQWADSRGPLEGEELEHSQEITWDDDTEFV) are essential for glycoprotein binding.

Belongs to the lyssavirus matrix protein family. As to quaternary structure, homomultimer. Interacts with nucleoprotein and with the cytoplasmic domain of glycoprotein. Interacts with host ATP6V1A; this interaction plays an important role in virion uncoating after viral entry.

It is found in the virion membrane. The protein resides in the host endomembrane system. Its subcellular location is the host cytoplasm. Plays a major role in assembly, budding and uncoating of virion after membrane fusion. Completely covers the ribonucleoprotein coil and keep it in condensed bullet-shaped form. Inhibits viral transcription and stimulates replication. Plays a major role in early induction of TRAIL-mediated apoptosis in infected neurons. Inhibits the integrated stress response (ISR) in the infected cell by blocking the formation of stress granules. The protein is Matrix protein (M) of Homo sapiens (Human).